Here is an 84-residue protein sequence, read N- to C-terminus: Large ribosomal subunit protein bL31B (84 aa).

The protein belongs to the bacterial ribosomal protein bL31 family. Type B subfamily. As to quaternary structure, part of the 50S ribosomal subunit.

The protein is Large ribosomal subunit protein bL31B of Alkalilimnicola ehrlichii (strain ATCC BAA-1101 / DSM 17681 / MLHE-1).